Consider the following 165-residue polypeptide: MTRKQKRLAVIAGGMGFIIAAVLLVMFAFSQSVAYFYMPADLAKTPVAPETRIRLGGLVGAGSVVRGAGSTVEFTVTDGSANAVKVHYTGILPDLFREGQGVVTEGMFASAGNVFIADTVLAKHDETYMPKEVADKLKAQGLWQDGQGAQSQAGQGQGQEAKATR.

The Cytoplasmic portion of the chain corresponds to 1–7 (MTRKQKR). A helical; Signal-anchor for type II membrane protein membrane pass occupies residues 8 to 28 (LAVIAGGMGFIIAAVLLVMFA). The Periplasmic segment spans residues 29 to 165 (FSQSVAYFYM…GQGQEAKATR (137 aa)). H124 and Y128 together coordinate heme. Residues 144–154 (QDGQGAQSQAG) are compositionally biased toward low complexity. Residues 144 to 165 (QDGQGAQSQAGQGQGQEAKATR) are disordered.

Belongs to the CcmE/CycJ family.

The protein localises to the cell inner membrane. Its function is as follows. Heme chaperone required for the biogenesis of c-type cytochromes. Transiently binds heme delivered by CcmC and transfers the heme to apo-cytochromes in a process facilitated by CcmF and CcmH. This Rhizobium etli (strain CIAT 652) protein is Cytochrome c-type biogenesis protein CcmE.